The sequence spans 98 residues: NADH-ubiquinone oxidoreductase chain 4L (98 aa).

3 helical membrane-spanning segments follow: residues 1-21 (MSLT…GLLL), 29-49 (SLLC…MTIL), and 61-81 (IILL…LVMV).

The protein belongs to the complex I subunit 4L family. As to quaternary structure, core subunit of respiratory chain NADH dehydrogenase (Complex I) which is composed of 45 different subunits.

It is found in the mitochondrion inner membrane. It carries out the reaction a ubiquinone + NADH + 5 H(+)(in) = a ubiquinol + NAD(+) + 4 H(+)(out). Core subunit of the mitochondrial membrane respiratory chain NADH dehydrogenase (Complex I) which catalyzes electron transfer from NADH through the respiratory chain, using ubiquinone as an electron acceptor. Part of the enzyme membrane arm which is embedded in the lipid bilayer and involved in proton translocation. This Vampyrodes caraccioli (Great stripe-faced bat) protein is NADH-ubiquinone oxidoreductase chain 4L (MT-ND4L).